Consider the following 310-residue polypeptide: L-lactate dehydrogenase (310 aa).

Residues valine 11, aspartate 32, tyrosine 62, and 76–77 contribute to the NAD(+) site; that span reads GV. Residues glutamine 79, arginine 85, and 117-120 each bind substrate; that span reads NPVD. Residues 115–117 and serine 140 contribute to the NAD(+) site; that span reads ATN. A substrate-binding site is contributed by 145 to 148; that stretch reads DTAR. 2 residues coordinate beta-D-fructose 1,6-bisphosphate: arginine 150 and histidine 165. The active-site Proton acceptor is histidine 172. Tyrosine 218 carries the phosphotyrosine modification. Residue threonine 227 coordinates substrate.

It belongs to the LDH/MDH superfamily. LDH family. As to quaternary structure, homotetramer.

Its subcellular location is the cytoplasm. The enzyme catalyses (S)-lactate + NAD(+) = pyruvate + NADH + H(+). The protein operates within fermentation; pyruvate fermentation to lactate; (S)-lactate from pyruvate: step 1/1. Activated by citrate at pH 5. Allosterically activated by fructose 1,6-bisphosphate (FBP) at pH from 5.8 to 7.2. Its function is as follows. Catalyzes the conversion of lactate to pyruvate. This chain is L-lactate dehydrogenase, found in Thermus aquaticus.